The following is a 144-amino-acid chain: Maximins 10/H3 (144 aa).

The N-terminal stretch at 1-18 (MNFKYIVAVSFLIASAYA) is a signal peptide. Positions 19–43 (RSVKNDEQSLSQRDVLDEESLREFR) are excised as a propeptide. A Serine amide modification is found at Ser-70. Residues 74 to 123 (TAEDHEVMKRLEAVMRDLDSLDYPEEATERETRGFNQEEIANLFTKKEKR) constitute a propeptide that is removed on maturation. Residue Ile-143 is modified to Isoleucine amide.

It belongs to the bombinin family. Expressed by the skin glands.

It is found in the secreted. Its function is as follows. Maximin-10 shows antimicrobial activity against bacteria and against the fungus C.albicans. It has little hemolytic activity. Functionally, maximin-H3 shows antibacterial activity against both Gram-positive and Gram-negative bacteria. It also shows antimicrobial activity against the fungus C.albicans. Shows strong hemolytic activity. The polypeptide is Maximins 10/H3 (Bombina maxima (Giant fire-bellied toad)).